Consider the following 152-residue polypeptide: SsrA-binding protein (152 aa).

This sequence belongs to the SmpB family.

It localises to the cytoplasm. Functionally, required for rescue of stalled ribosomes mediated by trans-translation. Binds to transfer-messenger RNA (tmRNA), required for stable association of tmRNA with ribosomes. tmRNA and SmpB together mimic tRNA shape, replacing the anticodon stem-loop with SmpB. tmRNA is encoded by the ssrA gene; the 2 termini fold to resemble tRNA(Ala) and it encodes a 'tag peptide', a short internal open reading frame. During trans-translation Ala-aminoacylated tmRNA acts like a tRNA, entering the A-site of stalled ribosomes, displacing the stalled mRNA. The ribosome then switches to translate the ORF on the tmRNA; the nascent peptide is terminated with the 'tag peptide' encoded by the tmRNA and targeted for degradation. The ribosome is freed to recommence translation, which seems to be the essential function of trans-translation. The protein is SsrA-binding protein of Rickettsia typhi (strain ATCC VR-144 / Wilmington).